We begin with the raw amino-acid sequence, 138 residues long: Large ribosomal subunit protein uL16 (138 aa).

This sequence belongs to the universal ribosomal protein uL16 family. As to quaternary structure, part of the 50S ribosomal subunit.

Its function is as follows. Binds 23S rRNA and is also seen to make contacts with the A and possibly P site tRNAs. The polypeptide is Large ribosomal subunit protein uL16 (Anaeromyxobacter dehalogenans (strain 2CP-C)).